We begin with the raw amino-acid sequence, 143 residues long: Nucleoside diphosphate kinase (143 aa).

Residues Lys11, Phe59, Arg87, Thr93, Arg104, and Asn114 each contribute to the ATP site. The active-site Pros-phosphohistidine intermediate is the His117.

The protein belongs to the NDK family. In terms of assembly, homotetramer. The cofactor is Mg(2+).

It localises to the cytoplasm. It carries out the reaction a 2'-deoxyribonucleoside 5'-diphosphate + ATP = a 2'-deoxyribonucleoside 5'-triphosphate + ADP. The catalysed reaction is a ribonucleoside 5'-diphosphate + ATP = a ribonucleoside 5'-triphosphate + ADP. Its function is as follows. Major role in the synthesis of nucleoside triphosphates other than ATP. The ATP gamma phosphate is transferred to the NDP beta phosphate via a ping-pong mechanism, using a phosphorylated active-site intermediate. This Escherichia coli O7:K1 (strain IAI39 / ExPEC) protein is Nucleoside diphosphate kinase.